The sequence spans 730 residues: Synaptotagmin-like protein 5 (730 aa).

The RabBD domain occupies 7-123 (FINLSFLLDH…IITGEWFFEE (117 aa)). The FYVE-type zinc-finger motif lies at 64–106 (CVHCHRNLGLIFDRGDPCQACSLRVCRECRVAGPNGSWKCTVC). The residue at position 147 (S147) is a Phosphoserine. Disordered stretches follow at residues 147 to 188 (SPGA…GFLL), 217 to 271 (QHFR…TRTV), and 294 to 355 (SQEL…LDKD). 2 stretches are compositionally biased toward polar residues: residues 248 to 271 (PKSS…TRTV) and 305 to 322 (TSGT…SSDQ). 2 consecutive C2 domains span residues 406 to 527 (VSGE…DEWF) and 563 to 694 (PPEQ…VDWM).

In terms of assembly, binds RAB27A that has been activated by GTP-binding, and possibly also RAB3A and RAB6A. Highly expressed in placenta and liver.

The protein resides in the membrane. Functionally, may act as Rab effector protein and play a role in vesicle trafficking. Binds phospholipids. This chain is Synaptotagmin-like protein 5 (SYTL5), found in Homo sapiens (Human).